A 384-amino-acid polypeptide reads, in one-letter code: Putative pectate lyase 2 (384 aa).

The N-terminal stretch at 1-23 (MASLFLTIISLLFAAFSSSVVEA) is a signal peptide. D182, D206, and D210 together coordinate Ca(2+). R262 is a catalytic residue.

This sequence belongs to the polysaccharide lyase 1 family. Ca(2+) serves as cofactor.

It carries out the reaction Eliminative cleavage of (1-&gt;4)-alpha-D-galacturonan to give oligosaccharides with 4-deoxy-alpha-D-galact-4-enuronosyl groups at their non-reducing ends.. It participates in glycan metabolism; pectin degradation; 2-dehydro-3-deoxy-D-gluconate from pectin: step 2/5. In Arabidopsis thaliana (Mouse-ear cress), this protein is Putative pectate lyase 2.